The chain runs to 141 residues: ATP synthase F(0) complex subunit C3, mitochondrial (141 aa).

The N-terminal 66 residues, 1–66 (MFACAKLACT…REFQTTAVNR (66 aa)), are a transit peptide targeting the mitochondrion. Residues 82–102 (VGVAGSGAGIGTVFGSLIIGY) traverse the membrane as a helical segment. K109 is subject to N6,N6,N6-trimethyllysine. The helical transmembrane segment at 117-137 (ILGFALSEAMGLFCLMVAFLI) threads the bilayer.

It belongs to the ATPase C chain family. F-type ATPases have 2 components, CF(1) - the catalytic core - and CF(0) - the membrane proton channel. CF(1) has five subunits: alpha(3), beta(3), gamma(1), delta(1), epsilon(1). CF(0) has three main subunits: a, b and c. Interacts with TMEM70 and TMEM242. Trimethylated by ATPSCKMT at Lys-109. Methylation is required for proper incorporation of the C subunit into the ATP synthase complex and mitochondrial respiration.

It is found in the mitochondrion membrane. Mitochondrial membrane ATP synthase (F(1)F(0) ATP synthase or Complex V) produces ATP from ADP in the presence of a proton gradient across the membrane which is generated by electron transport complexes of the respiratory chain. F-type ATPases consist of two structural domains, F(1) - containing the extramembraneous catalytic core and F(0) - containing the membrane proton channel, linked together by a central stalk and a peripheral stalk. During catalysis, ATP synthesis in the catalytic domain of F(1) is coupled via a rotary mechanism of the central stalk subunits to proton translocation. Part of the complex F(0) domain. A homomeric c-ring of probably 10 subunits is part of the complex rotary element. The chain is ATP synthase F(0) complex subunit C3, mitochondrial from Bos taurus (Bovine).